We begin with the raw amino-acid sequence, 460 residues long: Argininosuccinate lyase (460 aa).

Belongs to the lyase 1 family. Argininosuccinate lyase subfamily.

Its subcellular location is the cytoplasm. It carries out the reaction 2-(N(omega)-L-arginino)succinate = fumarate + L-arginine. The protein operates within amino-acid biosynthesis; L-arginine biosynthesis; L-arginine from L-ornithine and carbamoyl phosphate: step 3/3. In Leuconostoc mesenteroides subsp. mesenteroides (strain ATCC 8293 / DSM 20343 / BCRC 11652 / CCM 1803 / JCM 6124 / NCDO 523 / NBRC 100496 / NCIMB 8023 / NCTC 12954 / NRRL B-1118 / 37Y), this protein is Argininosuccinate lyase.